Consider the following 468-residue polypeptide: Na(+)/H(+) antiporter NhaA (468 aa).

The next 12 helical transmembrane spans lie at 28-48 (FLHV…IALV), 79-99 (LHFW…GMEI), 115-135 (ALPL…YLAF), 143-163 (AGWA…LALL), 173-193 (IFLL…IAFF), 196-216 (GGLD…VLGL), 219-239 (IGIG…TGLL), 240-260 (MTGA…PVVP), 317-337 (ALHP…NAGV), 356-376 (VAGA…WLLV), 392-412 (IVLI…IAML), and 426-446 (LGVL…GAIY).

Belongs to the NhaA Na(+)/H(+) (TC 2.A.33) antiporter family.

It localises to the cell inner membrane. The enzyme catalyses Na(+)(in) + 2 H(+)(out) = Na(+)(out) + 2 H(+)(in). In terms of biological role, na(+)/H(+) antiporter that extrudes sodium in exchange for external protons. The polypeptide is Na(+)/H(+) antiporter NhaA (Bordetella petrii (strain ATCC BAA-461 / DSM 12804 / CCUG 43448)).